A 149-amino-acid chain; its full sequence is Down syndrome critical region protein 9 (149 aa).

The interval 1–41 (MGRICPVNSRARRLRARPGRPSGDSLPYHQLQGGAPRLWSP) is disordered.

Testis specific.

The protein is Down syndrome critical region protein 9 (DSCR9) of Homo sapiens (Human).